Here is a 37-residue protein sequence, read N- to C-terminus: Large ribosomal subunit protein bL36 (37 aa).

Belongs to the bacterial ribosomal protein bL36 family.

This Parasynechococcus marenigrum (strain WH8102) protein is Large ribosomal subunit protein bL36.